We begin with the raw amino-acid sequence, 236 residues long: Mediator of RNA polymerase II transcription subunit 20 (236 aa).

Belongs to the Mediator complex subunit 20 family. As to quaternary structure, component of the Mediator complex.

The protein localises to the nucleus. Functionally, component of the Mediator complex, a coactivator involved in the regulated transcription of nearly all RNA polymerase II-dependent genes. Mediator functions as a bridge to convey information from gene-specific regulatory proteins to the basal RNA polymerase II transcription machinery. Mediator is recruited to promoters by direct interactions with regulatory proteins and serves as a scaffold for the assembly of a functional preinitiation complex with RNA polymerase II and the general transcription factors. This Debaryomyces hansenii (strain ATCC 36239 / CBS 767 / BCRC 21394 / JCM 1990 / NBRC 0083 / IGC 2968) (Yeast) protein is Mediator of RNA polymerase II transcription subunit 20 (SRB2).